The primary structure comprises 530 residues: DNA damage-binding protein cmr1 (530 aa).

Disordered regions lie at residues 34–115 (VGLF…RKSD) and 224–250 (TKPV…LTTL). The segment covering 52 to 62 (AKKKKPAPKKV) has biased composition (basic residues). The segment covering 89-108 (EVAKRKADEHDAALQEAERA) has biased composition (basic and acidic residues). The WD 1 repeat unit spans residues 188-229 (LTPERIYAMTFHPSESKPLIFAGDKMGHLGVLDASQTKPVSA). A compositionally biased stretch (acidic residues) spans 233–244 (DEDEEDDDDDPD). 6 WD repeats span residues 252-292 (PHTR…SVER), 302-339 (VPIS…QDSA), 344-384 (LSDK…HKSP), 389-430 (EHES…ASWK), 453-496 (GRWV…LAQL), and 499-530 (DGIT…CLWM).

Belongs to the WD repeat DDB2/WDR76 family.

Functionally, DNA-binding protein that binds to both single- and double-stranded DNA. Binds preferentially to UV-damaged DNA. May be involved in DNA-metabolic processes. The polypeptide is DNA damage-binding protein cmr1 (Aspergillus terreus (strain NIH 2624 / FGSC A1156)).